We begin with the raw amino-acid sequence, 304 residues long: N-carbamoyl-D-amino acid hydrolase (304 aa).

Residues 5–276 enclose the CN hydrolase domain; the sequence is MILAVGQQGP…DEVITAAVCL (272 aa). Active-site residues include E47, K127, and C172.

As to quaternary structure, homotetramer.

The catalysed reaction is an N-carbamoyl-D-amino acid + H2O + 2 H(+) = a D-alpha-amino acid + NH4(+) + CO2. The activity decreases with increasing concentration of H(2)O(2). Has 68% and 43% of activity remaining upon treatment with 0.1 and 0.2 mM H(2)O(2) for 30 minutes, respectively. Inhibited significantly by 2 mM Zn(2+), Cu(2+) and Ag(+), moderately by Co(2+), Mn(2+), Sn(2+) and Mg(2+), and only slightly by Ba(2+). Slightly activated by Fe(2+) and Ca(2+). No effect on activity by metal chelators EDTA and 8-hydroxyquinoline at 2 mM or by dithiothreitol, 2-mercaptoethanol or phenylmethanesulfonyl fluoride. Its function is as follows. Catalyzes the hydrolysis of N-carbamoyl-D-amino acids to the corresponding D-amino acids. Hydrolyzes aromatic and aliphatic N-carbamoyl-D-amino acids in vitro. Effectively hydrolyzes N-carbamoyl-D-p-hydroxyphenylglycine and N-carbamoyl-DL-p-hydroxyphenylglycine, and to a lesser extent N-carbamoyl-D-methionine. No activity for N-carbamoyl-L-amino acids, N-carbamoyl-beta-alanine or (RS)-alpha-ethyl-N-carbamoylphenylglycine in vitro. This chain is N-carbamoyl-D-amino acid hydrolase, found in Ensifer adhaerens (Sinorhizobium morelense).